Consider the following 186-residue polypeptide: Proline-rich protein 3 (186 aa).

A disordered region spans residues 1–97; sequence MPKRKKQNQP…LGPRSSPYGR (97 aa). 2 stretches are compositionally biased toward pro residues: residues 33-44 and 67-79; these read MGPPSLLGPPPM and MIPPLLSLPPPPR. The C3H1-type zinc finger occupies 153 to 181; that stretch reads KSDRPVCRHFSKKGHCRYEDHCAFYHPGV.

This Rattus norvegicus (Rat) protein is Proline-rich protein 3 (Prr3).